A 128-amino-acid polypeptide reads, in one-letter code: Sulfurtransferase TusD (128 aa).

The active-site Cysteine persulfide intermediate is the Cys-78.

The protein belongs to the DsrE/TusD family. As to quaternary structure, heterohexamer, formed by a dimer of trimers. The hexameric TusBCD complex contains 2 copies each of TusB, TusC and TusD. The TusBCD complex interacts with TusE.

The protein resides in the cytoplasm. Part of a sulfur-relay system required for 2-thiolation of 5-methylaminomethyl-2-thiouridine (mnm(5)s(2)U) at tRNA wobble positions. Accepts sulfur from TusA and transfers it in turn to TusE. This is Sulfurtransferase TusD from Klebsiella pneumoniae subsp. pneumoniae (strain ATCC 700721 / MGH 78578).